We begin with the raw amino-acid sequence, 785 residues long: DNA ligase (785 aa).

NAD(+)-binding positions include aspartate 32 to aspartate 36, serine 81 to leucine 82, and glutamate 121. Lysine 123 (N6-AMP-lysine intermediate) is an active-site residue. The NAD(+) site is built by arginine 144, glutamate 181, lysine 297, and lysine 321. 4 residues coordinate Zn(2+): cysteine 415, cysteine 418, cysteine 445, and cysteine 451. The region spanning valine 702–alanine 785 is the BRCT domain.

It belongs to the NAD-dependent DNA ligase family. LigA subfamily. Mg(2+) serves as cofactor. Mn(2+) is required as a cofactor.

The enzyme catalyses NAD(+) + (deoxyribonucleotide)n-3'-hydroxyl + 5'-phospho-(deoxyribonucleotide)m = (deoxyribonucleotide)n+m + AMP + beta-nicotinamide D-nucleotide.. In terms of biological role, DNA ligase that catalyzes the formation of phosphodiester linkages between 5'-phosphoryl and 3'-hydroxyl groups in double-stranded DNA using NAD as a coenzyme and as the energy source for the reaction. It is essential for DNA replication and repair of damaged DNA. This chain is DNA ligase, found in Pseudomonas fluorescens (strain Pf0-1).